A 110-amino-acid polypeptide reads, in one-letter code: U1-lycotoxin-Ls1jj (110 aa).

The signal sequence occupies residues 1–20 (MKFVLLFGVLLVTLFSYSSA). The propeptide occupies 21-44 (EMLDDFDQADEDELLSLIEKEEAR). Disulfide bonds link C47–C62, C54–C71, C61–C89, and C73–C87.

This sequence belongs to the neurotoxin 19 (CSTX) family. 03 subfamily. As to expression, expressed by the venom gland.

It localises to the secreted. The protein is U1-lycotoxin-Ls1jj of Lycosa singoriensis (Wolf spider).